The following is a 189-amino-acid chain: Xanthine phosphoribosyltransferase (189 aa).

Residues Leu20 and Asn27 each coordinate xanthine. 127–131 (AYGNA) contributes to the 5-phospho-alpha-D-ribose 1-diphosphate binding site. Position 155 (Lys155) interacts with xanthine.

Belongs to the purine/pyrimidine phosphoribosyltransferase family. Xpt subfamily. As to quaternary structure, homodimer.

The protein localises to the cytoplasm. The enzyme catalyses XMP + diphosphate = xanthine + 5-phospho-alpha-D-ribose 1-diphosphate. The protein operates within purine metabolism; XMP biosynthesis via salvage pathway; XMP from xanthine: step 1/1. Functionally, converts the preformed base xanthine, a product of nucleic acid breakdown, to xanthosine 5'-monophosphate (XMP), so it can be reused for RNA or DNA synthesis. This chain is Xanthine phosphoribosyltransferase, found in Bacteroides fragilis (strain ATCC 25285 / DSM 2151 / CCUG 4856 / JCM 11019 / LMG 10263 / NCTC 9343 / Onslow / VPI 2553 / EN-2).